The following is a 240-amino-acid chain: MRDRDRLLAAFSKDTGITLKPEQIAMIEAYTGLLLDYNQRVNLTAITDREEIWRKHVLDSLLLFLALEIPPAAKVIDIGTGAGIPGLILKIYRPDLEMALLESQNKKVAFLKKAVATLGLQGIECLWGRAEDIGRQKNYRESFDLAVSRGLAGMNTLAEYCLPFVRVGGFMIAYKGPGGEGELNAAARAIEILGGGTKKVWRGSLTGGQEVRQLIIIQKEHPTPPVYPRRPGLPAKRPLQ.

Residues G79, 130 to 131 (AE), and R149 each bind S-adenosyl-L-methionine.

This sequence belongs to the methyltransferase superfamily. RNA methyltransferase RsmG family.

It localises to the cytoplasm. In terms of biological role, specifically methylates the N7 position of a guanine in 16S rRNA. This is Ribosomal RNA small subunit methyltransferase G from Moorella thermoacetica (strain ATCC 39073 / JCM 9320).